The chain runs to 701 residues: Heterodisulfide reductase subunit A-like protein (701 aa).

152–175 (GGGIAGIFAALDIANAGYKVYLVE) contributes to the FAD binding site. Residues 239–268 (KQTWVDWDLCTGCGACTDVCPPKARVPDEF) form the 4Fe-4S ferredoxin-type 1 domain. [4Fe-4S] cluster contacts are provided by C248, C251, C254, C326, C627, C630, C633, C637, C660, C663, C666, and C670. 2 4Fe-4S ferredoxin-type domains span residues 618 to 647 (LVSE…MTKY) and 651 to 680 (MRAE…LHGF).

This sequence belongs to the HdrA family. As to quaternary structure, the heterodisulfide reductase is composed of three subunits; HdlA, HdlB and HdlC. It forms a complex with the F420-non-reducing hydrogenase (Mvh), which provides the reducing equivalents to the heterodisulfide reductase. The cofactor is [4Fe-4S] cluster. FAD serves as cofactor.

The protein resides in the cytoplasm. Its function is as follows. Has oxidoreductase activity. The Hdl and Mvh subunits may together mediate electron transfer from hydrogen to an unidentified electron acceptor on the cytoplasmic side of the membrane. The protein is Heterodisulfide reductase subunit A-like protein (hdlA) of Archaeoglobus profundus (strain DSM 5631 / JCM 9629 / NBRC 100127 / Av18).